Consider the following 236-residue polypeptide: MKLNIAYPVNGSQKKINIEDKNKVRCFMEKRIGQEVEATTLGDEFKGYVFKITGGNDTEGFPMMQGVGAPTRVRLLLDGRSGCFKPSRDGERKRKSVRGCIVAEDIASLQLIIVKKGDAEIPGLTDVSFPASKGPKRASNIRKLFKLSKDEDVRSFVIRRELPATDKRKAKSKAPKIQRLVTPTTVARRKALRAKKAARHTKASNEAAEYAKLVAQRQQAKAKRSVKVSSKKVVAK.

Belongs to the eukaryotic ribosomal protein eS6 family. As to quaternary structure, component of the small ribosomal subunit. Part of the small subunit (SSU) processome, composed of more than 70 proteins and the RNA chaperone small nucleolar RNA (snoRNA) U3. Ribosomal protein S6 is the major substrate of protein kinases in eukaryote ribosomes.

The protein resides in the cytoplasm. The protein localises to the nucleus. It localises to the nucleolus. Functionally, component of the 40S small ribosomal subunit. Plays an important role in controlling cell growth and proliferation through the selective translation of particular classes of mRNA. Part of the small subunit (SSU) processome, first precursor of the small eukaryotic ribosomal subunit. During the assembly of the SSU processome in the nucleolus, many ribosome biogenesis factors, an RNA chaperone and ribosomal proteins associate with the nascent pre-rRNA and work in concert to generate RNA folding, modifications, rearrangements and cleavage as well as targeted degradation of pre-ribosomal RNA by the RNA exosome. This chain is Small ribosomal subunit protein eS6 (rps6), found in Dictyostelium discoideum (Social amoeba).